Consider the following 459-residue polypeptide: MSLPHATIPTNLRRRAFRRSCDRCHAQKLKCTGSNANLVRAQCQRCQQAGLRCVYSERLPKRNLHKEAAAGTTRATETSQPMTATSSTVFSSLAETPPPYCSPPTHIGTSALKETLSEPSAATLQFYDTSINFDDPESFPGGWPQPNTFRDDANSNESSGIPDLGYDFEGPLDATAPVSPSLFDLEVEGNSSSGQSNTSNTQRDLFESLSDVSQDLEVILHGVTVEWPKQKILSYPIGDFLNAFGRLLLHLQERVITSSNSSMLDGCLQTKNLFMAVHCYMLSVKIMTSLSQLLLSEVMKAQPCGQKQSTRMDWYWSGSTTRNDNGRAEALPSFHSNLHIGELISHLDPFMHALSSACTTLRVSLRLLSEIETALGIAQEHGAAASIRLVLSDMPSTSWQILGAENKTITPASRLLSVLWSDEAGDEEPKSTKASGKTINVLRRCYKEIFALAKKHNIA.

The segment at residues 21-53 (CDRCHAQKLKCTGSNANLVRAQCQRCQQAGLRC) is a DNA-binding region (zn(2)-C6 fungal-type). Disordered stretches follow at residues 64-84 (LHKEAAAGTTRATETSQPMTA) and 135-170 (DPESFPGGWPQPNTFRDDANSNESSGIPDLGYDFEG). Over residues 69–78 (AAGTTRATET) the composition is skewed to low complexity.

The protein localises to the nucleus. Its function is as follows. Transcription factor that regulates the gene cluster that mediates the biosynthesis of compactin, also known as mevastatin or ML-236B, and which acts as a potent competitive inhibitor of HMG-CoA reductase. Binds to the consensus-binding motif 5'-WCGG-N(6)-TCGG-3' of target genes. The sequence is that of Transcription factor mlcR from Penicillium citrinum.